Consider the following 236-residue polypeptide: Flagellar L-ring protein (236 aa).

The signal sequence occupies residues 1 to 24 (MKNKNRLNTIKLLSISLLIAVTTA). Residue Cys25 is the site of N-palmitoyl cysteine attachment. Residue Cys25 is the site of S-diacylglycerol cysteine attachment.

This sequence belongs to the FlgH family. The basal body constitutes a major portion of the flagellar organelle and consists of four rings (L,P,S, and M) mounted on a central rod.

It is found in the cell outer membrane. The protein resides in the bacterial flagellum basal body. Functionally, assembles around the rod to form the L-ring and probably protects the motor/basal body from shearing forces during rotation. In Colwellia psychrerythraea (strain 34H / ATCC BAA-681) (Vibrio psychroerythus), this protein is Flagellar L-ring protein.